We begin with the raw amino-acid sequence, 146 residues long: D-aminoacyl-tRNA deacylase (146 aa).

The short motif at 138–139 is the Gly-cisPro motif, important for rejection of L-amino acids element; that stretch reads GP.

It belongs to the DTD family. As to quaternary structure, homodimer.

It localises to the cytoplasm. It catalyses the reaction glycyl-tRNA(Ala) + H2O = tRNA(Ala) + glycine + H(+). It carries out the reaction a D-aminoacyl-tRNA + H2O = a tRNA + a D-alpha-amino acid + H(+). Its function is as follows. An aminoacyl-tRNA editing enzyme that deacylates mischarged D-aminoacyl-tRNAs. Also deacylates mischarged glycyl-tRNA(Ala), protecting cells against glycine mischarging by AlaRS. Acts via tRNA-based rather than protein-based catalysis; rejects L-amino acids rather than detecting D-amino acids in the active site. By recycling D-aminoacyl-tRNA to D-amino acids and free tRNA molecules, this enzyme counteracts the toxicity associated with the formation of D-aminoacyl-tRNA entities in vivo and helps enforce protein L-homochirality. The sequence is that of D-aminoacyl-tRNA deacylase from Tolumonas auensis (strain DSM 9187 / NBRC 110442 / TA 4).